A 380-amino-acid chain; its full sequence is Chorismate synthase (380 aa).

Arg-47 lines the NADP(+) pocket. FMN contacts are provided by residues 124-126 (RSS), Gly-288, 303-307 (KPTST), and Arg-329.

It belongs to the chorismate synthase family. In terms of assembly, homotetramer. Requires FMNH2 as cofactor.

It catalyses the reaction 5-O-(1-carboxyvinyl)-3-phosphoshikimate = chorismate + phosphate. The protein operates within metabolic intermediate biosynthesis; chorismate biosynthesis; chorismate from D-erythrose 4-phosphate and phosphoenolpyruvate: step 7/7. In terms of biological role, catalyzes the anti-1,4-elimination of the C-3 phosphate and the C-6 proR hydrogen from 5-enolpyruvylshikimate-3-phosphate (EPSP) to yield chorismate, which is the branch point compound that serves as the starting substrate for the three terminal pathways of aromatic amino acid biosynthesis. This reaction introduces a second double bond into the aromatic ring system. The protein is Chorismate synthase of Leptospira borgpetersenii serovar Hardjo-bovis (strain JB197).